The chain runs to 219 residues: Probable GTP-binding protein EngB (219 aa).

The EngB-type G domain occupies 24–207; the sequence is VQPEIAFAGR…HELIESWLRP (184 aa). GTP is bound by residues 32 to 39, 59 to 63, 81 to 84, 148 to 151, and 186 to 188; these read GRSNAGKS, GRTQH, DLPG, TKCD, and FSA. Positions 39 and 61 each coordinate Mg(2+).

This sequence belongs to the TRAFAC class TrmE-Era-EngA-EngB-Septin-like GTPase superfamily. EngB GTPase family. Mg(2+) is required as a cofactor.

Necessary for normal cell division and for the maintenance of normal septation. This chain is Probable GTP-binding protein EngB, found in Burkholderia ambifaria (strain ATCC BAA-244 / DSM 16087 / CCUG 44356 / LMG 19182 / AMMD) (Burkholderia cepacia (strain AMMD)).